The following is a 179-amino-acid chain: Shikimate kinase (179 aa).

Residue 12–17 (GVGKSK) coordinates ATP. Ser-16 is a binding site for Mg(2+). The substrate site is built by Asp-34, Arg-61, and Gly-83. Arg-131 lines the ATP pocket. Residue Arg-147 coordinates substrate.

This sequence belongs to the shikimate kinase family. As to quaternary structure, monomer. Mg(2+) is required as a cofactor.

The protein resides in the cytoplasm. It carries out the reaction shikimate + ATP = 3-phosphoshikimate + ADP + H(+). Its pathway is metabolic intermediate biosynthesis; chorismate biosynthesis; chorismate from D-erythrose 4-phosphate and phosphoenolpyruvate: step 5/7. Catalyzes the specific phosphorylation of the 3-hydroxyl group of shikimic acid using ATP as a cosubstrate. This is Shikimate kinase from Leptospira borgpetersenii serovar Hardjo-bovis (strain JB197).